The chain runs to 69 residues: Large ribosomal subunit protein uL29 (69 aa).

Belongs to the universal ribosomal protein uL29 family.

In Staphylococcus aureus (strain Mu3 / ATCC 700698), this protein is Large ribosomal subunit protein uL29.